The chain runs to 192 residues: 7-methyl-GTP pyrophosphatase (192 aa).

The active-site Proton acceptor is aspartate 69.

Belongs to the Maf family. YceF subfamily. It depends on a divalent metal cation as a cofactor.

The protein resides in the cytoplasm. It carries out the reaction N(7)-methyl-GTP + H2O = N(7)-methyl-GMP + diphosphate + H(+). Nucleoside triphosphate pyrophosphatase that hydrolyzes 7-methyl-GTP (m(7)GTP). May have a dual role in cell division arrest and in preventing the incorporation of modified nucleotides into cellular nucleic acids. The sequence is that of 7-methyl-GTP pyrophosphatase from Pseudomonas syringae pv. syringae (strain B728a).